The chain runs to 85 residues: Fungal defensin triintsin (85 aa).

An N-terminal signal peptide occupies residues 1-21 (MQFTKLATVLIVSLMGSAAIA). A propeptide spanning residues 22–47 (APSVDNAPAVAAEEVAAAPAENLEKR) is cleaved from the precursor. 3 disulfides stabilise this stretch: Cys-51/Cys-72, Cys-58/Cys-80, and Cys-62/Cys-82.

This sequence belongs to the invertebrate defensin family. Disulfide bonds are essential for antimicrobial activity.

It is found in the secreted. Its function is as follows. Antimicrobial peptide with broad-spectrum activity against Gram-positive bacteria, Gram-negative bacteria, and fungi. Also inhibits clinical isolates, including methicillin-resistant S.aureus (MRSA) (MIC=32 uM), K.pneumoniae, C.albicans and C.parapsilosis. Displays minimal inhibitory concentration (MIC) values similar to minimal bactericidal concentrations (MBC), suggesting a disruptive mechanism mode of action associated with membrane lysis. In vitro, shows hemolytic activity against human red blood cells. This Trichophyton interdigitale (strain MR816) protein is Fungal defensin triintsin.